A 317-amino-acid chain; its full sequence is Forkhead box protein B2 (317 aa).

Positions 13 to 107 (KPPYSYISLT…ENGSFLRRRK (95 aa)) form a DNA-binding region, fork-head.

In terms of tissue distribution, first expressed within the dorsolateral ectoderm, except for the organizer territory. During gastrulation, expressed in 2 ectodermal stripes adjacent to the dorsal midline. With the onset of neurulation, expression shifts first to the neural plate before settling on the bottom of the neural tube, on top of the notochord. Expression is then absent until stage 35, at which stage a pair of cells in the fourth rhombomere in the dorsolateral outer area of the rhombencephalon show expression. This is followed shortly afterwards by expression in a pair of cells in rhombomere 6 at the ventricular side of the rhombencephalon.

It is found in the nucleus. Its function is as follows. Transcription factor. The sequence is that of Forkhead box protein B2 from Xenopus laevis (African clawed frog).